We begin with the raw amino-acid sequence, 876 residues long: GRB2-associated and regulator of MAPK protein 1 (876 aa).

A CABIT region spans residues 12-320 (KDVKWSSVAV…HLVKGESWPE (309 aa)). Residues Tyr-105 and Tyr-453 each carry the phosphotyrosine modification. Residues 496-572 (IPGTLGAAVK…SPSPTLSYYS (77 aa)) are disordered. Residues 498–550 (GTLGAAVKSSDTALPPPPVPPKSEAVREECRLLNAPPVPPRSAKPLSTSPSIP) form a necessary for interaction with GRB2 region. The span at 558 to 572 (RQQTRSPSPTLSYYS) shows a compositional bias: polar residues. 2 positions are modified to phosphoserine: Ser-610 and Ser-614. 2 disordered regions span residues 626–664 (WPNHYSGASESQTRSDFLLDPSRSYSYPRQKTPGTPKRN) and 738–763 (ASETSPLPLKIDGAEEDPKSGSPDLS). 2 stretches are compositionally biased toward polar residues: residues 631–640 (SGASESQTRS) and 648–658 (RSYSYPRQKTP). The SAM domain occupies 811 to 876 (LSIEEVSKSL…QFINGWRPKI (66 aa)).

Belongs to the GAREM family. In terms of assembly, isoform 1 interacts with EGFR. Isoform 1 interacts (via proline-rich domain and phosphorylated at Tyr-105 and Tyr-453) with GRB2 (via SH3 domains); the interaction occurs upon EGF stimulation. Isoform 1 interacts (phosphorylated at Tyr-453) with PTPN11; the interaction increases MAPK/ERK activity and does not affect the GRB2/SOS complex formation. Isoform 2 does not interact with GRB2. On EGF stimulation, phosphorylated on Tyr-105 and Tyr-453. Isoform 1 is ubiquitously expressed.

Acts as an adapter protein that plays a role in intracellular signaling cascades triggered either by the cell surface activated epidermal growth factor receptor and/or cytoplasmic protein tyrosine kinases. Promotes activation of the MAPK/ERK signaling pathway. Plays a role in the regulation of cell proliferation. This is GRB2-associated and regulator of MAPK protein 1 (GAREM1) from Homo sapiens (Human).